The sequence spans 420 residues: 4-hydroxy-3-methylbut-2-en-1-yl diphosphate synthase (flavodoxin) (420 aa).

Residues Cys307, Cys310, Cys353, and Glu360 each contribute to the [4Fe-4S] cluster site.

This sequence belongs to the IspG family. Requires [4Fe-4S] cluster as cofactor.

The enzyme catalyses (2E)-4-hydroxy-3-methylbut-2-enyl diphosphate + oxidized [flavodoxin] + H2O + 2 H(+) = 2-C-methyl-D-erythritol 2,4-cyclic diphosphate + reduced [flavodoxin]. Its pathway is isoprenoid biosynthesis; isopentenyl diphosphate biosynthesis via DXP pathway; isopentenyl diphosphate from 1-deoxy-D-xylulose 5-phosphate: step 5/6. Its function is as follows. Converts 2C-methyl-D-erythritol 2,4-cyclodiphosphate (ME-2,4cPP) into 1-hydroxy-2-methyl-2-(E)-butenyl 4-diphosphate. This is 4-hydroxy-3-methylbut-2-en-1-yl diphosphate synthase (flavodoxin) from Brucella melitensis biotype 2 (strain ATCC 23457).